The primary structure comprises 205 residues: ATP synthase subunit b (205 aa).

A helical transmembrane segment spans residues 45–65; that stretch reads LGMTATAWVSLAMVIVILLLL.

This sequence belongs to the ATPase B chain family. As to quaternary structure, F-type ATPases have 2 components, F(1) - the catalytic core - and F(0) - the membrane proton channel. F(1) has five subunits: alpha(3), beta(3), gamma(1), delta(1), epsilon(1). F(0) has three main subunits: a(1), b(2) and c(10-14). The alpha and beta chains form an alternating ring which encloses part of the gamma chain. F(1) is attached to F(0) by a central stalk formed by the gamma and epsilon chains, while a peripheral stalk is formed by the delta and b chains.

The protein localises to the cell inner membrane. F(1)F(0) ATP synthase produces ATP from ADP in the presence of a proton or sodium gradient. F-type ATPases consist of two structural domains, F(1) containing the extramembraneous catalytic core and F(0) containing the membrane proton channel, linked together by a central stalk and a peripheral stalk. During catalysis, ATP synthesis in the catalytic domain of F(1) is coupled via a rotary mechanism of the central stalk subunits to proton translocation. Functionally, component of the F(0) channel, it forms part of the peripheral stalk, linking F(1) to F(0). The chain is ATP synthase subunit b from Rhizorhabdus wittichii (strain DSM 6014 / CCUG 31198 / JCM 15750 / NBRC 105917 / EY 4224 / RW1) (Sphingomonas wittichii).